The chain runs to 231 residues: Aquaporin Z (231 aa).

2 helical membrane-spanning segments follow: residues Cys-9–Phe-29 and Ile-34–Val-54. Positions Asn-63–Ala-65 match the NPA 1 motif. A run of 3 helical transmembrane segments spans residues Val-82–Ile-102, Tyr-129–Ile-149, and Phe-156–Ile-176. Positions Asn-186–Ala-188 match the NPA 2 motif. A helical membrane pass occupies residues Leu-202–Ile-222.

The protein belongs to the MIP/aquaporin (TC 1.A.8) family. Homotetramer.

Its subcellular location is the cell inner membrane. It catalyses the reaction H2O(in) = H2O(out). Channel that permits osmotically driven movement of water in both directions. It is involved in the osmoregulation and in the maintenance of cell turgor during volume expansion in rapidly growing cells. It mediates rapid entry or exit of water in response to abrupt changes in osmolarity. The protein is Aquaporin Z of Escherichia coli O6:H1 (strain CFT073 / ATCC 700928 / UPEC).